We begin with the raw amino-acid sequence, 205 residues long: MALQLSREQGITLRGSAEIVAEFFSFGINSILYQRGIYPSETFTRVQKYGLTLLVTTDLELIKYLNNVVEQLKDWLYKCSVQKLVVVISNIESGEVLERWQFDIECDKTAKDDSAPREKSQKAIQDEIRSVIRQITATVTFLPLLEVSCSFDLLIYTDKDLVVPEKWEESGPQFITNSEEVRLRSFTTTIHKVNSMVAYKIPVND.

At alanine 2 the chain carries N-acetylalanine. Residues serine 6, serine 130, serine 170, serine 178, serine 185, and serine 195 each carry the phosphoserine modification. An HORMA domain is found at arginine 14–valine 197. Residues serine 195–aspartate 205 are required for assuming the closed conformation and for interaction with CDC20.

The protein belongs to the MAD2 family. In terms of assembly, monomer and homodimer. Heterodimerizes with MAD2L1 in order to form a tetrameric MAD1L1-MAD2L1 core complex. In the closed and open conformation, interacts with MAD1L1. Formation of a heterotetrameric core complex containing two molecules each of MAD1L1 and of MAD2L1 promotes binding of another molecule of MAD2L1 to each MAD2L1, resulting in a heterohexamer. Interacts with MAD2L1BP. Interacts with ADAM17/TACE. Interacts with CDC20. Dimeric MAD2L1 in the closed conformation interacts with CDC20. Monomeric MAD2L1 in the open conformation does not interact with CDC20. CDC20 competes with MAD1L1 for MAD2L1 binding. In the closed conformation, interacts with BUB1B. Interacts with TTK. Interacts with TPR. Binds to UBD (via ubiquitin-like 1 domain) during mitosis. Interacts with isoform 1 and isoform 2 of NEK2. Interacts with HSF1; this interaction occurs in mitosis. Interacts with isoform 3 of MAD1L1; this interaction leads to the cytoplasmic sequestration of MAD2L1. Phosphorylated on multiple serine residues. The level of phosphorylation varies during the cell cycle and is highest during mitosis. Phosphorylation abolishes interaction with MAD1L1 and reduces interaction with CDC20. Phosphorylated by NEK2.

The protein localises to the nucleus. It is found in the chromosome. It localises to the centromere. The protein resides in the kinetochore. Its subcellular location is the cytoplasm. The protein localises to the cytoskeleton. It is found in the spindle pole. Its function is as follows. Component of the spindle-assembly checkpoint that prevents the onset of anaphase until all chromosomes are properly aligned at the metaphase plate. In the closed conformation (C-MAD2) forms a heterotetrameric complex with MAD1L1 at unattached kinetochores during prometaphase, the complex recruits open conformation molecules of MAD2L1 (O-MAD2) and then promotes the conversion of O-MAD2 to C-MAD2. Required for the execution of the mitotic checkpoint which monitors the process of kinetochore-spindle attachment and inhibits the activity of the anaphase promoting complex by sequestering CDC20 until all chromosomes are aligned at the metaphase plate. This chain is Mitotic spindle assembly checkpoint protein MAD2A (MAD2L1), found in Homo sapiens (Human).